The sequence spans 240 residues: MRWKDEGIIIAAKKYGDKNLILSLFTKNHGKRRGLTKLTNNSNYKFQISNLLHAEWSAKLPENLGFFKCELIESSFHHFFQDRLKSITIVSFSSILEKVLPESEPCAVLYDNFRYFIDVIKHNNQSWQSHYLNLELLLLTQLGFKLDLSKCAVTGVKENLQFISPKTGRAVSKKAGDYYADKLLPFPQMLHDVYNNNLQNSYSFQEFQLGLKVTGYFLNKYLFLQLNVKFPELRNLMLSL.

The protein belongs to the RecO family.

In terms of biological role, involved in DNA repair and RecF pathway recombination. In Wolbachia sp. subsp. Drosophila simulans (strain wRi), this protein is DNA repair protein RecO.